We begin with the raw amino-acid sequence, 547 residues long: Sensor histidine kinase CitA (547 aa).

Topologically, residues 1 to 23 (MSIYPMYTRKITHWFARRSFQNR) are cytoplasmic. The chain crosses the membrane as a helical span at residues 24–44 (IFLLILFTSTIVMLAMSWYLT). Residues 45-180 (DITEERLHYQ…TIEQLENWLS (136 aa)) are Periplasmic-facing. Positions 109, 112, 150, and 152 each coordinate citrate. The chain crosses the membrane as a helical span at residues 181–201 (LQISSLLIPMAIMLLLLLFCA). The Cytoplasmic portion of the chain corresponds to 202-547 (RRFSLHIKKQ…IPLTRDEHHG (346 aa)). The region spanning 225-264 (IQQSVLFESVFEGLIAIDSDYKITAINQTARRLLNLSQPE) is the PAS domain. The 196-residue stretch at 347–542 (AVQHEHRNLI…IFTLYIPLTR (196 aa)) folds into the Histidine kinase domain. Phosphohistidine; by autocatalysis is present on histidine 350.

As to quaternary structure, homodimer. In vitro CitB and the CitA kinase domain form a complex, formation of which is enhanced by ATP. Autophosphorylated.

It localises to the cell inner membrane. The enzyme catalyses ATP + protein L-histidine = ADP + protein N-phospho-L-histidine.. Member of the two-component regulatory system CitA/CitB. Probably activates CitB by phosphorylation. The periplasmic domain binds H-citrate(2-), which is essential for induction of the citrate-fermentation genes. This chain is Sensor histidine kinase CitA (citA), found in Klebsiella pneumoniae.